Reading from the N-terminus, the 346-residue chain is GTPase Obg (346 aa).

An Obg domain is found at Met-1–Leu-158. The region spanning Ala-159–Asp-330 is the OBG-type G domain. Residues Gly-165–Ser-172, Phe-190–Thr-194, Asp-212–Gly-215, Asn-282–Asp-285, and Ser-311–Ile-313 contribute to the GTP site. Mg(2+) is bound by residues Ser-172 and Thr-192.

Belongs to the TRAFAC class OBG-HflX-like GTPase superfamily. OBG GTPase family. As to quaternary structure, monomer. Requires Mg(2+) as cofactor.

Its subcellular location is the cytoplasm. Functionally, an essential GTPase which binds GTP, GDP and possibly (p)ppGpp with moderate affinity, with high nucleotide exchange rates and a fairly low GTP hydrolysis rate. Plays a role in control of the cell cycle, stress response, ribosome biogenesis and in those bacteria that undergo differentiation, in morphogenesis control. The polypeptide is GTPase Obg (Sulfurihydrogenibium sp. (strain YO3AOP1)).